An 81-amino-acid polypeptide reads, in one-letter code: Photosystem I iron-sulfur center (81 aa).

4Fe-4S ferredoxin-type domains are found at residues 2–31 (AHSVKIYDTCIGCTQCVRACPTDVLEMIPW) and 39–68 (IASAPRTEDCVGCKRCESACPTDFLSVRVY). The [4Fe-4S] cluster site is built by Cys11, Cys14, Cys17, Cys21, Cys48, Cys51, Cys54, and Cys58.

In terms of assembly, the eukaryotic PSI reaction center is composed of at least 11 subunits. The cofactor is [4Fe-4S] cluster.

Its subcellular location is the plastid. It localises to the chloroplast thylakoid membrane. It catalyses the reaction reduced [plastocyanin] + hnu + oxidized [2Fe-2S]-[ferredoxin] = oxidized [plastocyanin] + reduced [2Fe-2S]-[ferredoxin]. Apoprotein for the two 4Fe-4S centers FA and FB of photosystem I (PSI); essential for photochemical activity. FB is the terminal electron acceptor of PSI, donating electrons to ferredoxin. The C-terminus interacts with PsaA/B/D and helps assemble the protein into the PSI complex. Required for binding of PsaD and PsaE to PSI. PSI is a plastocyanin-ferredoxin oxidoreductase, converting photonic excitation into a charge separation, which transfers an electron from the donor P700 chlorophyll pair to the spectroscopically characterized acceptors A0, A1, FX, FA and FB in turn. The sequence is that of Photosystem I iron-sulfur center from Adiantum capillus-veneris (Maidenhair fern).